We begin with the raw amino-acid sequence, 469 residues long: DNA-binding transcriptional regulator NtrC (469 aa).

The Response regulatory domain occupies 5 to 119; that stretch reads IVWVVDDDSS…EAVALVERAI (115 aa). Aspartate 54 carries the 4-aspartylphosphate modification. The Sigma-54 factor interaction domain maps to 140 to 369; the sequence is MIGEAPAMQD…LENTCRWLTV (230 aa). Residues 168-175 and 231-240 each bind ATP; these read GESGTGKE and ADGGTLFLDE. Residues 445-464 constitute a DNA-binding region (H-T-H motif); sequence KQEAARLLGWGRNTLTRKLK.

Phosphorylated and dephosphorylated by NtrB.

Its subcellular location is the cytoplasm. Functionally, member of the two-component regulatory system NtrB/NtrC, which controls expression of the nitrogen-regulated (ntr) genes in response to nitrogen limitation. Phosphorylated NtrC binds directly to DNA and stimulates the formation of open promoter-sigma54-RNA polymerase complexes. This chain is DNA-binding transcriptional regulator NtrC (glnG), found in Salmonella typhimurium (strain LT2 / SGSC1412 / ATCC 700720).